The primary structure comprises 35 residues: Pheromone-binding protein 2 (35 aa).

It belongs to the PBP/GOBP family. In terms of assembly, homodimer. In terms of tissue distribution, antenna.

Its function is as follows. This major soluble protein in olfactory sensilla of male moths might serve to solubilize the extremely hydrophobic pheromone molecules and to transport pheromone through the aqueous lymph to receptors located on olfactory cilia. The polypeptide is Pheromone-binding protein 2 (Lymantria dispar (Gypsy moth)).